Reading from the N-terminus, the 160-residue chain is Ribonuclease P protein component 2 (160 aa).

It belongs to the eukaryotic/archaeal RNase P protein component 2 family. As to quaternary structure, consists of a catalytic RNA component and at least 4-5 protein subunits.

The protein localises to the cytoplasm. The enzyme catalyses Endonucleolytic cleavage of RNA, removing 5'-extranucleotides from tRNA precursor.. Functionally, part of ribonuclease P, a protein complex that generates mature tRNA molecules by cleaving their 5'-ends. This chain is Ribonuclease P protein component 2, found in Methanoculleus marisnigri (strain ATCC 35101 / DSM 1498 / JR1).